Here is a 163-residue protein sequence, read N- to C-terminus: Nucleotide-binding protein Spro_1084 (163 aa).

The protein belongs to the YajQ family.

Nucleotide-binding protein. This is Nucleotide-binding protein Spro_1084 from Serratia proteamaculans (strain 568).